Reading from the N-terminus, the 142-residue chain is Large ribosomal subunit protein uL11 (142 aa).

This sequence belongs to the universal ribosomal protein uL11 family. As to quaternary structure, part of the ribosomal stalk of the 50S ribosomal subunit. Interacts with L10 and the large rRNA to form the base of the stalk. L10 forms an elongated spine to which L12 dimers bind in a sequential fashion forming a multimeric L10(L12)X complex. One or more lysine residues are methylated.

Functionally, forms part of the ribosomal stalk which helps the ribosome interact with GTP-bound translation factors. This is Large ribosomal subunit protein uL11 from Histophilus somni (strain 129Pt) (Haemophilus somnus).